The following is a 288-amino-acid chain: Fibroblast growth factor 2 (288 aa).

Positions 1–133 (MVGVGGGDVE…RGSRPGPAGT (133 aa)) are disordered. Residues 1–142 (MVGVGGGDVE…TMAAGSITTL (142 aa)) constitute a propeptide, or 93, or 124, or 125, or 131, or 161. Positions 52-64 (SVNPRSRAAGSPR) are enriched in low complexity. A compositionally biased stretch (basic and acidic residues) spans 68 to 84 (RRTEERPSGSRLGDRGR). Residues R108, R110, and R112 each carry the omega-N-methylarginine; alternate modification. R108, R110, and R112 each carry symmetric dimethylarginine; alternate. Over residues 113 to 132 (GTAAPRAAPAARGSRPGPAG) the composition is skewed to low complexity. N169 contacts heparin. Positions 179–181 (DGR) match the Cell attachment site; atypical motif. Y215 carries the post-translational modification Phosphotyrosine; by TEC. The Cell attachment site; atypical motif lies at 221-223 (DGR). Residue K228 forms a Glycyl lysine isopeptide (Lys-Gly) (interchain with G-Cter in SUMO1) linkage. Residues 261 to 277 (KRTGQYKLGSKTGPGQK) form a heparin-binding region.

It belongs to the heparin-binding growth factors family. As to quaternary structure, monomer. Homodimer. Interacts with FGFR1, FGFR2, FGFR3 and FGFR4. Affinity between fibroblast growth factors (FGFs) and their receptors is increased by heparan sulfate glycosaminoglycans that function as coreceptors. Interacts with CSPG4, FGFBP1 and TEC. Found in a complex with FGFBP1, FGF1 and FGF2. Interacts with FGFBP3. Interacts with integrin ITGAV:ITGB3; the interaction is required for FGF2 signaling. Interacts with SNORC (via the extracellular domain). Interacts with glypican GPC3. Post-translationally, phosphorylation at Tyr-215 regulates FGF2 unconventional secretion. Several N-termini starting at positions 94, 125, 126, 132, 143 and 162 have been identified by direct sequencing. Expressed in granulosa and cumulus cells. Expressed in hepatocellular carcinoma cells, but not in non-cancerous liver tissue.

Its subcellular location is the secreted. The protein resides in the nucleus. Acts as a ligand for FGFR1, FGFR2, FGFR3 and FGFR4. Also acts as an integrin ligand which is required for FGF2 signaling. Binds to integrin ITGAV:ITGB3. Plays an important role in the regulation of cell survival, cell division, cell differentiation and cell migration. Functions as a potent mitogen in vitro. Can induce angiogenesis. Mediates phosphorylation of ERK1/2 and thereby promotes retinal lens fiber differentiation. This is Fibroblast growth factor 2 (FGF2) from Homo sapiens (Human).